A 176-amino-acid polypeptide reads, in one-letter code: Large ribosomal subunit protein uL10 (176 aa).

It belongs to the universal ribosomal protein uL10 family. In terms of assembly, part of the ribosomal stalk of the 50S ribosomal subunit. The N-terminus interacts with L11 and the large rRNA to form the base of the stalk. The C-terminus forms an elongated spine to which L12 dimers bind in a sequential fashion forming a multimeric L10(L12)X complex.

Forms part of the ribosomal stalk, playing a central role in the interaction of the ribosome with GTP-bound translation factors. The sequence is that of Large ribosomal subunit protein uL10 from Sorangium cellulosum (strain So ce56) (Polyangium cellulosum (strain So ce56)).